A 109-amino-acid polypeptide reads, in one-letter code: Iron-sulfur cluster assembly protein CyaY (109 aa).

This sequence belongs to the frataxin family.

Its function is as follows. Involved in iron-sulfur (Fe-S) cluster assembly. May act as a regulator of Fe-S biogenesis. In Acidovorax ebreus (strain TPSY) (Diaphorobacter sp. (strain TPSY)), this protein is Iron-sulfur cluster assembly protein CyaY.